A 233-amino-acid polypeptide reads, in one-letter code: Large ribosomal subunit protein uL1 (233 aa).

The protein belongs to the universal ribosomal protein uL1 family. Part of the 50S ribosomal subunit.

In terms of biological role, binds directly to 23S rRNA. The L1 stalk is quite mobile in the ribosome, and is involved in E site tRNA release. Protein L1 is also a translational repressor protein, it controls the translation of the L11 operon by binding to its mRNA. The polypeptide is Large ribosomal subunit protein uL1 (Laribacter hongkongensis (strain HLHK9)).